Reading from the N-terminus, the 356-residue chain is Holliday junction branch migration complex subunit RuvB (356 aa).

Positions 4 to 191 are large ATPase domain (RuvB-L); the sequence is TDKLATEQRI…FGIVARLEFY (188 aa). Residues L30, R31, G72, K75, T76, T77, 138–140, R181, Y191, and R228 contribute to the ATP site; that span reads EDY. A Mg(2+)-binding site is contributed by T76. The segment at 192–262 is small ATPAse domain (RuvB-S); the sequence is DADQLSRIVR…VADAALAMLD (71 aa). Residues 265 to 356 are head domain (RuvB-H); it reads PVGFDLMDRK…RDEWDTPDGK (92 aa). R301, R320, and R325 together coordinate DNA.

This sequence belongs to the RuvB family. In terms of assembly, homohexamer. Forms an RuvA(8)-RuvB(12)-Holliday junction (HJ) complex. HJ DNA is sandwiched between 2 RuvA tetramers; dsDNA enters through RuvA and exits via RuvB. An RuvB hexamer assembles on each DNA strand where it exits the tetramer. Each RuvB hexamer is contacted by two RuvA subunits (via domain III) on 2 adjacent RuvB subunits; this complex drives branch migration. In the full resolvosome a probable DNA-RuvA(4)-RuvB(12)-RuvC(2) complex forms which resolves the HJ.

It is found in the cytoplasm. The catalysed reaction is ATP + H2O = ADP + phosphate + H(+). In terms of biological role, the RuvA-RuvB-RuvC complex processes Holliday junction (HJ) DNA during genetic recombination and DNA repair, while the RuvA-RuvB complex plays an important role in the rescue of blocked DNA replication forks via replication fork reversal (RFR). RuvA specifically binds to HJ cruciform DNA, conferring on it an open structure. The RuvB hexamer acts as an ATP-dependent pump, pulling dsDNA into and through the RuvAB complex. RuvB forms 2 homohexamers on either side of HJ DNA bound by 1 or 2 RuvA tetramers; 4 subunits per hexamer contact DNA at a time. Coordinated motions by a converter formed by DNA-disengaged RuvB subunits stimulates ATP hydrolysis and nucleotide exchange. Immobilization of the converter enables RuvB to convert the ATP-contained energy into a lever motion, pulling 2 nucleotides of DNA out of the RuvA tetramer per ATP hydrolyzed, thus driving DNA branch migration. The RuvB motors rotate together with the DNA substrate, which together with the progressing nucleotide cycle form the mechanistic basis for DNA recombination by continuous HJ branch migration. Branch migration allows RuvC to scan DNA until it finds its consensus sequence, where it cleaves and resolves cruciform DNA. This chain is Holliday junction branch migration complex subunit RuvB, found in Burkholderia cenocepacia (strain ATCC BAA-245 / DSM 16553 / LMG 16656 / NCTC 13227 / J2315 / CF5610) (Burkholderia cepacia (strain J2315)).